The primary structure comprises 1014 residues: Disease resistance protein RGA4 (1014 aa).

The tract at residues 1 to 182 is structured coiled coil (CC) domain; sequence MEAALLSGFI…PRIHEADLVG (182 aa). A coiled-coil region spans residues 105–145; the sequence is RTVRATKKLLQTNQHLAQELQRLKRMVEEANQRKQRYTAAA. Residues 189–466 form the NB-ARC domain; sequence ELLEQLAERQ…WLAEGFVEPV (278 aa). LRR repeat units lie at residues 484–506, 507–530, 531–552, 580–602, 603–624, 625–647, 701–725, 762–784, 785–807, 808–833, and 854–877; these read RNII…TYGM, MREF…DKFL, PKYV…NFNG, LRVL…ICNL, VLLK…IAKL, KDLE…VFGL, MNKL…DLRE, PCYL…VTSL, RGLK…ALSN, LSYL…GFPR, and LPFL…KIEC.

It belongs to the disease resistance NB-LRR family. Expressed in leaves.

Functionally, probable disease resistance protein. Resistance proteins guard the plant against pathogens that contain an appropriate avirulence protein via an indirect interaction with this avirulence protein. That triggers a defense system including the hypersensitive response, which restricts the pathogen growth. At the opposite of cultivars Aichi asahi and Sasanishiki, the cultivars Nipponbare, Mokoto and Hitomebore don't recognize the effector avirulence protein AVR-Pia from M.oryzae. This Oryza sativa subsp. japonica (Rice) protein is Disease resistance protein RGA4.